The primary structure comprises 508 residues: Cytochrome P450 monooxygenase BipB (508 aa).

Residues 11-31 traverse the membrane as a helical segment; that stretch reads ELAWLLLGPLVLFYVFKLFIY. Residue Cys448 coordinates heme.

It belongs to the cytochrome P450 family. It depends on heme as a cofactor.

The protein resides in the membrane. The protein operates within sesquiterpene biosynthesis. Cytochrome P450 monooxygenase; part of the minimal biosynthetic bip cluster that mediates the biosynthesis of bridged polycyclic sesquiterpenoids derived from sativene, isosativene, and longifolene. The sesquiterpene cyclase BipA acts as a versatile cyclase that converts farnesyl diphosphate (FPP) into (-)-sativene as the dominant product and (-)-isosativene and (-)-longifolene as minor ones. The cytochrome P450 monooxygenase BipB then hydroxylates different enantiomeric sesquiterpenes, such as (-)-longifolene and (+)-longifolene, at C-15 and C-14. The C-15- or both C-15- and C-14-hydroxylated products are further oxidized by unclustered oxidases, resulting in a structurally diverse array of sesquiterpenoids. The BipB-catalyzed hydroxylation at C-15 serves as an initiator for the oxidation by the unclustered oxidases. This is Cytochrome P450 monooxygenase BipB from Cochliobolus sativus (Common root rot and spot blotch fungus).